The primary structure comprises 506 residues: Gamma-aminobutyric acid receptor subunit epsilon (506 aa).

A signal peptide spans 1–17; that stretch reads MLPKVLLMLLNMFLALQ. Residues 18–277 lie on the Extracellular side of the membrane; it reads WRVGPHIKLE…MTFFFNVSRR (260 aa). Residues 32–65 are disordered; the sequence is AQDKVVFGPQPQPSGKKLPARETELTADHTTERP. Residues 50 to 65 show a composition bias toward basic and acidic residues; sequence PARETELTADHTTERP. N-linked (GlcNAc...) asparagine glycosylation is present at N135. The cysteines at positions 196 and 210 are disulfide-linked. An N-linked (GlcNAc...) asparagine glycan is attached at N253. Residues 278–298 traverse the membrane as a helical segment; that stretch reads FGFIVFQNYIPSSVTTMLSWV. At 299–308 the chain is on the cytoplasmic side; the sequence is SFWIKIEAAA. The chain crosses the membrane as a helical span at residues 309-328; the sequence is ARASVGVSSVLTMATLGTFS. Over 329 to 344 the chain is Extracellular; it reads RKNFPRVSYLTALDFY. A helical membrane pass occupies residues 345 to 365; that stretch reads IAICFVLCFCTLLEFTVLNFL. Topologically, residues 366 to 485 are cytoplasmic; sequence TYNNIERQAS…HVYRLDNYSR (120 aa). Residues 486 to 506 form a helical membrane-spanning segment; sequence VLFPITFFFFNVVYWVICLNL.

It belongs to the ligand-gated ion channel (TC 1.A.9) family. Gamma-aminobutyric acid receptor (TC 1.A.9.5) subfamily. GABRE sub-subfamily. In terms of assembly, heteropentamer, formed by a combination of alpha (GABRA1-6), beta (GABRB1-3), gamma (GABRG1-3), delta (GABRD), epsilon (GABRE), rho (GABRR1-3), pi (GABRP) and theta (GABRQ) chains, each subunit exhibiting distinct physiological and pharmacological properties. As to expression, expressed in brain and heart. Strongly expressed in locus ceruleus from the first postnatal day. Weakly expressed in other brainstem nuclei and in the hypothalamus. Found in the cerebral cortex of pups.

It is found in the cell membrane. It localises to the postsynaptic cell membrane. It carries out the reaction chloride(in) = chloride(out). Its function is as follows. Epsilon subunit of the heteropentameric ligand-gated chloride channel gated by gamma-aminobutyric acid (GABA), a major inhibitory neurotransmitter in the brain. GABA-gated chloride channels, also named GABA(A) receptors (GABAAR), consist of five subunits arranged around a central pore and contain GABA active binding site(s) located at the alpha and beta subunit interfaces. When activated by GABA, GABAARs selectively allow the flow of chloride anions across the cell membrane down their electrochemical gradient. GABARs containing epsilon subunit may also permit spontaneous chloride channel activity while preserving the structural information required for GABA-gated openings. GABARs containing epsilon subunit may regulate cardiac function. This Rattus norvegicus (Rat) protein is Gamma-aminobutyric acid receptor subunit epsilon.